Reading from the N-terminus, the 410-residue chain is Peptidase T (410 aa).

A Zn(2+)-binding site is contributed by His78. Asp80 is an active-site residue. Residue Asp140 participates in Zn(2+) binding. The Proton acceptor role is filled by Glu174. Residues Glu175, Asp197, and His379 each contribute to the Zn(2+) site.

This sequence belongs to the peptidase M20B family. It depends on Zn(2+) as a cofactor.

It is found in the cytoplasm. The enzyme catalyses Release of the N-terminal residue from a tripeptide.. Its function is as follows. Cleaves the N-terminal amino acid of tripeptides. The polypeptide is Peptidase T (Vibrio atlanticus (strain LGP32) (Vibrio splendidus (strain Mel32))).